Consider the following 578-residue polypeptide: Potassium-transporting ATPase potassium-binding subunit (578 aa).

11 helical membrane passes run 3 to 23, 67 to 87, 95 to 115, 136 to 156, 181 to 201, 264 to 284, 291 to 311, 396 to 416, 436 to 456, 504 to 524, and 543 to 563; these read AAAL…AVPL, AAAA…LERL, PAGL…SFAT, ALTV…AALV, LLLP…VPQT, LEAL…GALV, WTVY…TVSA, GLYG…LMVG, LAIL…CLLP, VAML…AGAF, and LFAG…FLPA.

This sequence belongs to the KdpA family. The system is composed of three essential subunits: KdpA, KdpB and KdpC.

The protein resides in the cell inner membrane. Part of the high-affinity ATP-driven potassium transport (or Kdp) system, which catalyzes the hydrolysis of ATP coupled with the electrogenic transport of potassium into the cytoplasm. This subunit binds the periplasmic potassium ions and delivers the ions to the membrane domain of KdpB through an intramembrane tunnel. The polypeptide is Potassium-transporting ATPase potassium-binding subunit (Anaeromyxobacter dehalogenans (strain 2CP-C)).